A 55-amino-acid chain; its full sequence is Large ribosomal subunit protein bL33 (55 aa).

Belongs to the bacterial ribosomal protein bL33 family.

This chain is Large ribosomal subunit protein bL33, found in Deinococcus deserti (strain DSM 17065 / CIP 109153 / LMG 22923 / VCD115).